The following is a 680-amino-acid chain: DNA-directed RNA polymerase subunit beta' (680 aa).

Positions 69, 71, 87, and 90 each coordinate Zn(2+). 3 residues coordinate Mg(2+): Asp489, Asp491, and Asp493.

This sequence belongs to the RNA polymerase beta' chain family. RpoC1 subfamily. As to quaternary structure, in plastids the minimal PEP RNA polymerase catalytic core is composed of four subunits: alpha, beta, beta', and beta''. When a (nuclear-encoded) sigma factor is associated with the core the holoenzyme is formed, which can initiate transcription. Mg(2+) serves as cofactor. It depends on Zn(2+) as a cofactor.

It localises to the plastid. It is found in the chloroplast. It catalyses the reaction RNA(n) + a ribonucleoside 5'-triphosphate = RNA(n+1) + diphosphate. Its function is as follows. DNA-dependent RNA polymerase catalyzes the transcription of DNA into RNA using the four ribonucleoside triphosphates as substrates. This is DNA-directed RNA polymerase subunit beta' from Draba nemorosa (Woodland whitlowgrass).